Here is a 75-residue protein sequence, read N- to C-terminus: Protein TM_1420 (75 aa).

The [2Fe-2S] cluster site is built by cysteine 6, cysteine 11, cysteine 39, and cysteine 43.

[2Fe-2S] cluster serves as cofactor.

In terms of biological role, might be part of a multi-protein complex, possibly involved in metal cluster assembly. In Thermotoga maritima (strain ATCC 43589 / DSM 3109 / JCM 10099 / NBRC 100826 / MSB8), this protein is Protein TM_1420.